Reading from the N-terminus, the 351-residue chain is Histidinol-phosphate aminotransferase (351 aa).

The segment at 1–26 (MRFRAELEPLSPYNPPRASQEAAAER) is disordered. Lysine 223 is modified (N6-(pyridoxal phosphate)lysine).

This sequence belongs to the class-II pyridoxal-phosphate-dependent aminotransferase family. Histidinol-phosphate aminotransferase subfamily. In terms of assembly, homodimer. It depends on pyridoxal 5'-phosphate as a cofactor.

The catalysed reaction is L-histidinol phosphate + 2-oxoglutarate = 3-(imidazol-4-yl)-2-oxopropyl phosphate + L-glutamate. The protein operates within amino-acid biosynthesis; L-histidine biosynthesis; L-histidine from 5-phospho-alpha-D-ribose 1-diphosphate: step 7/9. This Rubrobacter xylanophilus (strain DSM 9941 / JCM 11954 / NBRC 16129 / PRD-1) protein is Histidinol-phosphate aminotransferase.